The following is a 496-amino-acid chain: Glutamyl-tRNA(Gln) amidotransferase subunit A (496 aa).

Active-site charge relay system residues include lysine 75 and serine 150. Serine 174 (acyl-ester intermediate) is an active-site residue.

Belongs to the amidase family. GatA subfamily. As to quaternary structure, heterotrimer of A, B and C subunits.

The catalysed reaction is L-glutamyl-tRNA(Gln) + L-glutamine + ATP + H2O = L-glutaminyl-tRNA(Gln) + L-glutamate + ADP + phosphate + H(+). Functionally, allows the formation of correctly charged Gln-tRNA(Gln) through the transamidation of misacylated Glu-tRNA(Gln) in organisms which lack glutaminyl-tRNA synthetase. The reaction takes place in the presence of glutamine and ATP through an activated gamma-phospho-Glu-tRNA(Gln). This chain is Glutamyl-tRNA(Gln) amidotransferase subunit A, found in Burkholderia thailandensis (strain ATCC 700388 / DSM 13276 / CCUG 48851 / CIP 106301 / E264).